A 101-amino-acid chain; its full sequence is Glutaredoxin-1 (101 aa).

In terms of domain architecture, Glutaredoxin spans 5–101 (KDRVEKLIQT…GSLSKMIAAL (97 aa)). Cysteine 25 and cysteine 28 are oxidised to a cystine.

It belongs to the glutaredoxin family.

It is found in the cytoplasm. The protein localises to the cytosol. In terms of biological role, multifunctional enzyme with glutathione-dependent oxidoreductase, glutathione peroxidase and glutathione S-transferase (GST) activity. The disulfide bond functions as an electron carrier in the glutathione-dependent synthesis of deoxyribonucleotides by the enzyme ribonucleotide reductase. In addition, it is also involved in reducing cytosolic protein- and non-protein-disulfides in a coupled system with glutathione reductase. May play a role in protection against oxidative stress caused by superoxide in vivo by regulating the redox state of the protein sulfhydryl groups. In Rhizophagus irregularis (strain DAOM 181602 / DAOM 197198 / MUCL 43194) (Arbuscular mycorrhizal fungus), this protein is Glutaredoxin-1.